We begin with the raw amino-acid sequence, 431 residues long: MVSLEKNDRVMLARQLPLKSVALILAGGRGTRLKDLTNKRAKPAVHFGGKFRIIDFALSNCLNSGIRRIGVITQYQSHTLVQHIQRGWSLFSEEMNEFVDLLPAQQRMKGENWYRGTADAVTQNLDIIRCYKAEYVVILAGDHIYKQDYSRMLIDHVEKGARCTVACMPVPIKEATAFGVMAVDENDKIIDFVEKPANPPAMPGDASKSLASMGIYVFDADYLYELLAADDKDDASSHDFGKDIIPKITREGMAYAHPFPLSCVQSDPQAEPYWRDVGTLEAYWKANLDLASVTPELDMYDQNWPIRTHMESLPPAKFVQDRSGSHGMTLNSLVSGGCIISGSVVVQSVLFPRVRINSFCNIDSAVLLPEVWVGRSCRLRRCVIDRACIIPEGMVIGENAEEDARRFYRSEEGIVLVTREMLRKLQVKQER.

Position 39 (Lys-39) interacts with beta-D-fructose 1,6-bisphosphate. AMP contacts are provided by Arg-40, His-46, and Arg-52. Residues Tyr-114, Gly-179, 194–195, and Ser-212 each bind alpha-D-glucose 1-phosphate; that span reads EK. AMP-binding residues include Glu-370 and Arg-386. Residues 419–423 and 429–431 contribute to the beta-D-fructose 1,6-bisphosphate site; these read REMLR and QER.

This sequence belongs to the bacterial/plant glucose-1-phosphate adenylyltransferase family. Homotetramer.

The enzyme catalyses alpha-D-glucose 1-phosphate + ATP + H(+) = ADP-alpha-D-glucose + diphosphate. The protein operates within glycan biosynthesis; glycogen biosynthesis. Allosterically activated by fructose-1,6-bisphosphate (F16BP) and inhibited by AMP. Its function is as follows. Involved in the biosynthesis of ADP-glucose, a building block required for the elongation reactions to produce glycogen. Catalyzes the reaction between ATP and alpha-D-glucose 1-phosphate (G1P) to produce pyrophosphate and ADP-Glc. This is Glucose-1-phosphate adenylyltransferase from Salmonella typhi.